The following is a 160-amino-acid chain: MSRRHVAEKRIILPDMKYNSILLSRFINNIMKAGKKAVAEKIVYSALNKIEKKHSVDPYQTFNNAMHNVKPHLEVTSVRVGGANYQVPTHVDERRGYALASRWIINAASKRSEKMMIDKLAEELFEASNNRGVAIKKKEDTHKMAEANKAFSHFSPKKMK.

The protein belongs to the universal ribosomal protein uS7 family. As to quaternary structure, part of the 30S ribosomal subunit. Contacts proteins S9 and S11.

Functionally, one of the primary rRNA binding proteins, it binds directly to 16S rRNA where it nucleates assembly of the head domain of the 30S subunit. Is located at the subunit interface close to the decoding center, probably blocks exit of the E-site tRNA. The sequence is that of Small ribosomal subunit protein uS7 from Rickettsia prowazekii (strain Madrid E).